Reading from the N-terminus, the 245-residue chain is Flagellar basal-body rod protein FlgF (245 aa).

The protein belongs to the flagella basal body rod proteins family. As to quaternary structure, the basal body constitutes a major portion of the flagellar organelle and consists of five rings (E,L,P,S, and M) mounted on a central rod. The rod consists of about 26 subunits of FlgG in the distal portion, and FlgB, FlgC and FlgF are thought to build up the proximal portion of the rod with about 6 subunits each.

It is found in the bacterial flagellum basal body. This Caulobacter vibrioides (strain ATCC 19089 / CIP 103742 / CB 15) (Caulobacter crescentus) protein is Flagellar basal-body rod protein FlgF (flgF).